We begin with the raw amino-acid sequence, 704 residues long: MALDVLTDLKKVRNIGIMAHIDAGKTTTTERILFYTGINHKLGETHDGASTMDWMAQEQERGITITSAATSCYWHDYQINIIDTPGHVDFTVEVERSLRVLDGAVAVFDGKEGVEPQSETVWRQADKYEVPRICFVNKMDKLGADFYFTVDTIKSRLGATPLVLQLPIGAENDFVGVVDLITMKALVWEGDSKGDVSLGAKYETREIPEDLQDRAAEYRNQLVEAVAEADDELMEKYLGGEELTEDEIKAGIRKLTITSQAYPVLCGSAFKNRGVQPMLDAVVDYLPSPLDVEDVQGHAINDEEEVMTRTADADGPFAALAFKVASHPFYGQLTYIRVYSGKAKAGEQVMNSTKGKRERIGKLFQMHSNKENPVEEISAGHIYAAIGLKDTTTGDTLSDPSNQIVLESMSFPAPVIFVAIEPKTKGDQEKLSTAIQKLSAEDPTFTVSLNDETGQTEIGGMGELHLDILVDRMKREFKVEANVGKPQVAYRETIKKAVEKVDYTHKKQTGGSGQFAKVQVSFEPLPLDAEELYEFDNAVTGGRVPREYIPSVDHGIQDAMQLGILAGYPVVGVKATLVDGAYHDVDSSEMAFKIAGSMVFKEGARRANPVLLEPLMAVEVRTPEEYMGDVIGDLNSRRGQIQSMEDVTGVKLVSALVPLSEMFGYIGDLRSKTQGRAVYSMQFDSYSEVPKAVAEEIIQKNRGE.

Residues 10–290 (KKVRNIGIMA…AVVDYLPSPL (281 aa)) form the tr-type G domain. Residues 19–26 (AHIDAGKT), 83–87 (DTPGH), and 137–140 (NKMD) each bind GTP.

Belongs to the TRAFAC class translation factor GTPase superfamily. Classic translation factor GTPase family. EF-G/EF-2 subfamily.

The protein resides in the cytoplasm. Its function is as follows. Catalyzes the GTP-dependent ribosomal translocation step during translation elongation. During this step, the ribosome changes from the pre-translocational (PRE) to the post-translocational (POST) state as the newly formed A-site-bound peptidyl-tRNA and P-site-bound deacylated tRNA move to the P and E sites, respectively. Catalyzes the coordinated movement of the two tRNA molecules, the mRNA and conformational changes in the ribosome. The protein is Elongation factor G of Kocuria rhizophila (strain ATCC 9341 / DSM 348 / NBRC 103217 / DC2201).